The primary structure comprises 111 residues: Nucleoid-associated protein Cphamn1_1179 (111 aa).

The protein belongs to the YbaB/EbfC family. Homodimer.

Its subcellular location is the cytoplasm. It is found in the nucleoid. Functionally, binds to DNA and alters its conformation. May be involved in regulation of gene expression, nucleoid organization and DNA protection. The polypeptide is Nucleoid-associated protein Cphamn1_1179 (Chlorobium phaeobacteroides (strain BS1)).